A 536-amino-acid chain; its full sequence is Major facilitator superfamily domain-containing protein 4B (536 aa).

12 helical membrane-spanning segments follow: residues 19 to 39, 53 to 73, 81 to 101, 105 to 125, 140 to 160, 211 to 231, 297 to 317, 341 to 361, 366 to 386, 391 to 411, 428 to 448, and 456 to 476; these read LTYW…GPTI, ITWV…SGGA, ALLA…IIPL, VLLL…IDTI, IFLQ…PLIA, YAFW…FVLM, FFLI…IMGV, LNCI…PLSY, VHLL…LMIL, VFLF…FPCL, VLVT…GTLI, and FLVC…SVIL.

It belongs to the major facilitator superfamily.

Its subcellular location is the membrane. This Danio rerio (Zebrafish) protein is Major facilitator superfamily domain-containing protein 4B.